A 435-amino-acid chain; its full sequence is Pregnancy-specific beta-1-glycoprotein 6 (435 aa).

A signal peptide spans Met-1–Ala-34. Residues Gln-35–Ser-143 form the Ig-like V-type domain. N-linked (GlcNAc...) asparagine glycans are attached at residues Asn-61, Asn-103, and Asn-110. The Cell attachment site motif lies at Arg-126 to Asp-128. 3 consecutive Ig-like C2-type domains span residues Pro-148–Asn-233, Pro-241–Asn-326, and Pro-334–Ser-405. Cystine bridges form between Cys-168-Cys-216, Cys-261-Cys-309, and Cys-353-Cys-393. N-linked (GlcNAc...) asparagine glycosylation is found at Asn-198, Asn-267, Asn-302, and Asn-386.

It belongs to the immunoglobulin superfamily. CEA family.

It is found in the secreted. This is Pregnancy-specific beta-1-glycoprotein 6 (PSG6) from Homo sapiens (Human).